The chain runs to 239 residues: Fatty acid metabolism regulator protein (239 aa).

In terms of domain architecture, HTH gntR-type spans 6–74 (KGPASFAEKY…HGKPTRVNNF (69 aa)). The segment at residues 34–53 (ERELSELIGVTRTTLREVLQ) is a DNA-binding region (H-T-H motif).

Homodimer.

Its subcellular location is the cytoplasm. Its function is as follows. Multifunctional regulator of fatty acid metabolism. This is Fatty acid metabolism regulator protein from Shewanella pealeana (strain ATCC 700345 / ANG-SQ1).